Here is a 295-residue protein sequence, read N- to C-terminus: Mitochondrial dicarboxylate transporter (295 aa).

Solcar repeat units follow at residues 4 to 88 (KQVK…LKEH), 96 to 188 (TNMW…FKNF), and 198 to 286 (KKNS…LKKY). The next 6 membrane-spanning stretches (helical) occupy residues 8–24 (YPWW…VMNT), 63–82 (GLSA…FGMY), 98–122 (MWYL…ADLI), 163–182 (GWKP…VVTY), 204–224 (LTSS…ADVI), and 262–280 (WVPS…FFAM).

It belongs to the mitochondrial carrier (TC 2.A.29) family. As to quaternary structure, homodimer.

The protein resides in the mitochondrion inner membrane. Mitochondrial dicarboxylic transporter catalyzing the exchange of dicarboxylic acids like malate and succinate for inorganic phosphate. Required for growth on ethanol and acetate. The polypeptide is Mitochondrial dicarboxylate transporter (DIC1) (Candida glabrata (strain ATCC 2001 / BCRC 20586 / JCM 3761 / NBRC 0622 / NRRL Y-65 / CBS 138) (Yeast)).